The primary structure comprises 782 residues: MQVLVMLLAAAGTYLGLLTAPTAASNPGRQDTPSTLPLHRRQKRDWIWNQMHIDEEKNGSLPHYVGKIKSSVNHKNTKYQLKGESAGKVFRVDENTGDVYAFERLDREKIPEYQLVALVVDKNTEKNLESPSSFTIKVHDINDNWPVFTQLVFNASVPEMSVIGTSVIQLTAVDADDPTVADHASVIYRLKEGEEHFRIRGPGLIETASKNLDRETVPMYKIVVETQDAQGLRGDSGTATVFITLQDVNDNFPVFTQTRYTFSVPEDIRVGSPLGSLFVKDPDEPQNRKTKYSIVQGEYRDTFTIEPDPTRNEGIIKPMKPLDYERIQQYSFTIEATDPTIDLRYLSGTSTKNIARVIINVTDVDEPPNFKQPFYHFQLRENEKKPWIGSVLAVDPDAAQRSIGYSIRRTSDKGQFFGINKHGNIYNVKELDREVYPWYNLTVEAKELDSRGTPTGKESIVQVHIEVLDENDNAPEFAKPYEAKVCEDAPQGKLVVQISAIDKDVTPRDVKFKFSLSTEDSNFTLTDNHDNTANITVKHGYFDRERAKVHHLPILISDNGRPSLTGTSTLHVTVCKCNERGEFTLCEEMGAQVGVSIQALVAIFLCILTIAVISLLVYLRRRLRKQARAHGKSVPEIHEQLVTYDEEGGGEMDTTSYDVSVLNSVRHGGAKPPRPALDARPSLYAQVQKPPRHAPGAHAPGEMAAMIEVKKDEADHDGGGPPYDTLHIFGYEGAESIAESLSSLGTDSSDSDIDYDFLNDWGPRFKMLAELYGSDPREELLY.

The first 22 residues, 1-22, serve as a signal peptide directing secretion; the sequence is MQVLVMLLAAAGTYLGLLTAPT. A propeptide spanning residues 23–44 is cleaved from the precursor; it reads AASNPGRQDTPSTLPLHRRQKR. Cadherin domains are found at residues 45–148, 149–255, 256–370, 371–475, and 476–592; these read DWIW…WPVF, TQLV…FPVF, TQTR…PPNF, KQPF…DNAP, and EFAK…MGAQ. The Extracellular segment spans residues 45–598; the sequence is DWIWNQMHID…MGAQVGVSIQ (554 aa). 2 residues coordinate Ca(2+): Glu-55 and Glu-56. Asn-58 carries an N-linked (GlcNAc...) asparagine glycan. Asp-106, Glu-108, Asp-140, Ile-141, Asn-142, Asp-143, and Asn-144 together coordinate Ca(2+). An N-linked (GlcNAc...) asparagine glycan is attached at Asn-154. Ca(2+) contacts are provided by Asp-174, Asp-176, His-183, and Asp-228. Asn-360, Asn-440, Asn-522, and Asn-534 each carry an N-linked (GlcNAc...) asparagine glycan. The chain crosses the membrane as a helical span at residues 599–619; sequence ALVAIFLCILTIAVISLLVYL. A required for interaction with PALS1 region spans residues 620–659; the sequence is RRRLRKQARAHGKSVPEIHEQLVTYDEEGGGEMDTTSYDV. At 620–782 the chain is on the cytoplasmic side; the sequence is RRRLRKQARA…GSDPREELLY (163 aa).

As to quaternary structure, part of a complex composed of AMOTL2, MAGI1 and CDH5, within the complex AMOTL2 acts as a scaffold protein for the interaction of MAGI1 with CDH5. The complex is required for coupling actin fibers to cell junctions in endothelial cells. Within the complex AMOTL2 (via its N-terminus) interacts with CDH5. Interacts (via cadherin 5 domain) with PTPRB. Interacts with TRPC4. Interacts with KRIT1. Interacts with PARD3. Interacts with RTN4 (isoform B). Interacts with PALS1; the interaction promotes PALS1 localization to cell junctions and is required for CDH5-mediated vascular lumen formation and endothelial cell. Interacts with CTNND1/p120-catenin; the interaction controls CADH5 endocytosis. Post-translationally, phosphorylated on tyrosine residues by KDR/VEGFR-2. Dephosphorylated by PTPRB. O-glycosylated.

Its subcellular location is the cell junction. It is found in the adherens junction. The protein localises to the cell membrane. It localises to the cytoplasm. Its function is as follows. Cadherins are calcium-dependent cell adhesion proteins. They preferentially interact with themselves in a homophilic manner in connecting cells; cadherins may thus contribute to the sorting of heterogeneous cell types. This cadherin may play a important role in endothelial cell biology through control of the cohesion and organization of the intercellular junctions. It associates with alpha-catenin forming a link to the cytoskeleton. Plays a role in coupling actin fibers to cell junctions in endothelial cells, via acting as a cell junctional complex anchor for AMOTL2 and MAGI1. Acts in concert with KRIT1 and PALS1 to establish and maintain correct endothelial cell polarity and vascular lumen. These effects are mediated by recruitment and activation of the Par polarity complex and RAP1B. Required for activation of PRKCZ and for localization of phosphorylated PRKCZ, PARD3, TIAM1 and RAP1B to the cell junction. Associates with CTNND1/p120-catenin to control CADH5 endocytosis. This Sus scrofa (Pig) protein is Cadherin-5.